Here is a 432-residue protein sequence, read N- to C-terminus: D-amino acid dehydrogenase (432 aa).

Residue 3–17 (VVILGSGVVGVASAW) coordinates FAD.

Belongs to the DadA oxidoreductase family. Requires FAD as cofactor.

It carries out the reaction a D-alpha-amino acid + A + H2O = a 2-oxocarboxylate + AH2 + NH4(+). It participates in amino-acid degradation; D-alanine degradation; NH(3) and pyruvate from D-alanine: step 1/1. In terms of biological role, oxidative deamination of D-amino acids. This chain is D-amino acid dehydrogenase, found in Shigella boydii serotype 4 (strain Sb227).